The chain runs to 151 residues: UPF0756 membrane protein GTNG_2661 (151 aa).

The next 4 membrane-spanning stretches (helical) occupy residues valine 5 to isoleucine 25, tryptophan 53 to phenylalanine 73, tryptophan 86 to leucine 106, and leucine 116 to isoleucine 136.

This sequence belongs to the UPF0756 family.

Its subcellular location is the cell membrane. This is UPF0756 membrane protein GTNG_2661 from Geobacillus thermodenitrificans (strain NG80-2).